A 345-amino-acid chain; its full sequence is S-adenosylmethionine:tRNA ribosyltransferase-isomerase (345 aa).

Belongs to the QueA family. As to quaternary structure, monomer.

It localises to the cytoplasm. It carries out the reaction 7-aminomethyl-7-carbaguanosine(34) in tRNA + S-adenosyl-L-methionine = epoxyqueuosine(34) in tRNA + adenine + L-methionine + 2 H(+). It participates in tRNA modification; tRNA-queuosine biosynthesis. Its function is as follows. Transfers and isomerizes the ribose moiety from AdoMet to the 7-aminomethyl group of 7-deazaguanine (preQ1-tRNA) to give epoxyqueuosine (oQ-tRNA). This chain is S-adenosylmethionine:tRNA ribosyltransferase-isomerase, found in Anaeromyxobacter sp. (strain K).